The primary structure comprises 76 residues: Translational regulator CsrA (76 aa).

It belongs to the CsrA/RsmA family. In terms of assembly, homodimer; the beta-strands of each monomer intercalate to form a hydrophobic core, while the alpha-helices form wings that extend away from the core.

The protein resides in the cytoplasm. In terms of biological role, a translational regulator that binds mRNA to regulate translation initiation and/or mRNA stability. Usually binds in the 5'-UTR at or near the Shine-Dalgarno sequence preventing ribosome-binding, thus repressing translation. Its main target seems to be the major flagellin gene, while its function is anatagonized by FliW. The protein is Translational regulator CsrA of Helicobacter pylori (strain J99 / ATCC 700824) (Campylobacter pylori J99).